The chain runs to 938 residues: Isoleucine--tRNA ligase (938 aa).

The 'HIGH' region signature appears at 58–68 (PYANGNIHIGH). Glu563 contributes to the L-isoleucyl-5'-AMP binding site. A 'KMSKS' region motif is present at residues 604–608 (KMSKS). Lys607 lines the ATP pocket. Zn(2+)-binding residues include Cys903, Cys906, Cys921, and Cys924.

This sequence belongs to the class-I aminoacyl-tRNA synthetase family. IleS type 1 subfamily. As to quaternary structure, monomer. The cofactor is Zn(2+).

Its subcellular location is the cytoplasm. The enzyme catalyses tRNA(Ile) + L-isoleucine + ATP = L-isoleucyl-tRNA(Ile) + AMP + diphosphate. Its function is as follows. Catalyzes the attachment of isoleucine to tRNA(Ile). As IleRS can inadvertently accommodate and process structurally similar amino acids such as valine, to avoid such errors it has two additional distinct tRNA(Ile)-dependent editing activities. One activity is designated as 'pretransfer' editing and involves the hydrolysis of activated Val-AMP. The other activity is designated 'posttransfer' editing and involves deacylation of mischarged Val-tRNA(Ile). The polypeptide is Isoleucine--tRNA ligase (Buchnera aphidicola subsp. Schizaphis graminum (strain Sg)).